A 407-amino-acid chain; its full sequence is Na(+)-translocating NADH-quinone reductase subunit F (407 aa).

Residues 3-23 (IILGVVMFTLIVLALVLVILF) form a helical membrane-spanning segment. A 2Fe-2S ferredoxin-type domain is found at 32–126 (GDITISVNDD…DMDIELPEEI (95 aa)). [2Fe-2S] cluster is bound by residues cysteine 69, cysteine 75, cysteine 78, and cysteine 110. Residues 129–269 (VKKWECTVIS…SGPFGEFFAK (141 aa)) form the FAD-binding FR-type domain. The catalytic stretch occupies residues 272-389 (DAEMVFVGGG…PMMNAAVIGM (118 aa)).

The protein belongs to the NqrF family. Composed of six subunits; NqrA, NqrB, NqrC, NqrD, NqrE and NqrF. [2Fe-2S] cluster serves as cofactor. The cofactor is FAD.

It localises to the cell inner membrane. The catalysed reaction is a ubiquinone + n Na(+)(in) + NADH + H(+) = a ubiquinol + n Na(+)(out) + NAD(+). In terms of biological role, NQR complex catalyzes the reduction of ubiquinone-1 to ubiquinol by two successive reactions, coupled with the transport of Na(+) ions from the cytoplasm to the periplasm. The first step is catalyzed by NqrF, which accepts electrons from NADH and reduces ubiquinone-1 to ubisemiquinone by a one-electron transfer pathway. The chain is Na(+)-translocating NADH-quinone reductase subunit F from Vibrio campbellii (strain ATCC BAA-1116).